A 162-amino-acid polypeptide reads, in one-letter code: Gas vesicle protein I (162 aa).

A disordered region spans residues 1–162 (MTGKQHQKHE…AERQRGGADE (162 aa)). 2 stretches are compositionally biased toward basic and acidic residues: residues 22–37 (INRDKARSKLLRQREK) and 47–64 (RQSEVRRGNQSKAQHDTQ). Polar residues-rich tracts occupy residues 65-74 (SETQRGTQSK) and 81-110 (TGGTKNPTAHSTLPPQKTNAENAVRNSHST). Basic and acidic residues-rich tracts occupy residues 122–142 (ARERLYGLRLHRETTASEDKS) and 151–162 (PKAERQRGGADE).

The protein belongs to the gas vesicle GvpI family. GvpF to GvpM interact with each other in vitro, and may form multi-subunit complex(es). Interacts with GvpC and GvpO.

It is found in the gas vesicle. Its function is as follows. Proteins GvpF to GvpM might be involved in nucleating gas vesicle formation. A minor component of the gas vesicle. Gas vesicles are hollow, gas filled proteinaceous nanostructures found in some microorganisms. They allow positioning of halobacteria at the optimal depth for growth in the poorly aerated, shallow brine pools of their habitat. In terms of biological role, expression of a 9.5 kb mc-vac DNA fragment containing 2 divergently transcribed regions (gvpD-gvpE-gvpF-gvpG-gvpH-gvpI-gvpJ-gvpK-gvpL-gvpM and gvpA-gvpC-gvpN-gvpO) allows H.volcanii to produce gas vesicles. The protein is Gas vesicle protein I of Haloferax mediterranei (strain ATCC 33500 / DSM 1411 / JCM 8866 / NBRC 14739 / NCIMB 2177 / R-4) (Halobacterium mediterranei).